Reading from the N-terminus, the 305-residue chain is Protein EXORDIUM-like 2 (305 aa).

The first 23 residues, 1-23 (MASNYRFAIFLTLFFATAGFSAA), serve as a signal peptide directing secretion. Asn44 is a glycosylation site (N-linked (GlcNAc...) asparagine).

This sequence belongs to the EXORDIUM family.

It is found in the secreted. The protein resides in the extracellular space. It localises to the apoplast. In terms of biological role, may play a role in a brassinosteroid-dependent regulation of growth and development. This chain is Protein EXORDIUM-like 2 (EXL2), found in Arabidopsis thaliana (Mouse-ear cress).